We begin with the raw amino-acid sequence, 214 residues long: Adenylate kinase (214 aa).

Position 10 to 15 (10 to 15 (GAGKGT)) interacts with ATP. The segment at 30-59 (STGDMLRAAVKAGTPLGLEAKKVMDAGQLV) is NMP. Residues Thr-31, Arg-36, 57–59 (QLV), 85–88 (GFPR), and Gln-92 contribute to the AMP site. Residues 122–159 (GRRVHPGSGRVYHVVFNPPKVEGKDDVTGEDLAIRPDD) form an LID region. ATP-binding positions include Arg-123 and 132–133 (VY). 2 residues coordinate AMP: Arg-156 and Arg-167. Gln-200 lines the ATP pocket.

This sequence belongs to the adenylate kinase family. As to quaternary structure, monomer.

The protein resides in the cytoplasm. It carries out the reaction AMP + ATP = 2 ADP. It functions in the pathway purine metabolism; AMP biosynthesis via salvage pathway; AMP from ADP: step 1/1. Functionally, catalyzes the reversible transfer of the terminal phosphate group between ATP and AMP. Plays an important role in cellular energy homeostasis and in adenine nucleotide metabolism. The sequence is that of Adenylate kinase from Shewanella putrefaciens (strain CN-32 / ATCC BAA-453).